We begin with the raw amino-acid sequence, 259 residues long: Protein-tyrosine phosphatase RolB (259 aa).

A disordered region spans residues 219–259 (GISRPAASSPEPDLTLRLSGPDQEGEEGVMKPAAVNLKKEA).

It catalyses the reaction O-phospho-L-tyrosyl-[protein] + H2O = L-tyrosyl-[protein] + phosphate. Its function is as follows. Induces differentiation and growth of neoplastic roots (hairy roots). Seems to function as a tyrosine phosphatase. This is Protein-tyrosine phosphatase RolB (rolB) from Rhizobium rhizogenes (Agrobacterium rhizogenes).